The chain runs to 614 residues: Inactive leucine-rich repeat receptor-like serine/threonine-protein kinase At5g24100 (614 aa).

A signal peptide spans 1–21; that stretch reads MSRGRSFIFYFVLFLFFGSSA. Residues 22–251 lie on the Extracellular side of the membrane; sequence LYSQVTGDLA…KNGIYISEPA (230 aa). Residue N53 is glycosylated (N-linked (GlcNAc...) asparagine). LRR repeat units lie at residues 71–95, 96–120, 121–146, 148–167, 168–190, and 191–214; these read GTRV…TISR, LSEL…FLQL, KKLK…TWTN, TVLD…GFAN, LTGL…DLNL, and PGLR…LKRF. Residues N146, N158, and N167 are each glycosylated (N-linked (GlcNAc...) asparagine). N-linked (GlcNAc...) asparagine glycans are attached at residues N197 and N202. A helical membrane pass occupies residues 252–272; it reads ILGIAISVCFVIFFVIAVVII. The Cytoplasmic portion of the chain corresponds to 273 to 614; the sequence is VCYVKRQRKS…VETLEEIERD (342 aa). The Protein kinase domain occupies 341-611; sequence IASAEFLGKG…VKVVETLEEI (271 aa). At S343 the chain carries Phosphoserine. Residues 347–355 and K369 contribute to the ATP site; that span reads LGKGVFGMT. S420 carries the phosphoserine modification. Phosphothreonine occurs at positions 441, 514, and 591. One copy of the LRR 7 repeat lies at 578 to 601; it reads AKLLQMLQLGTSCTAMVPAKRPDM.

It belongs to the protein kinase superfamily. Ser/Thr protein kinase family.

The protein resides in the cell membrane. This is Inactive leucine-rich repeat receptor-like serine/threonine-protein kinase At5g24100 from Arabidopsis thaliana (Mouse-ear cress).